Consider the following 373-residue polypeptide: MGTLTDPTVDPADPHVKADDGAGLIDAGQVHPERLETLAEDQSQRDGANGVHFPVKTNTGNAAESTASTENGETGSIDVGKLRTKPSPVQTHIHRGGSEGLYRGASGGIYRSASGSTHIHRGASGGILRGQSGGIHRGRSGAIHLPSLQSISFSMTRLPEEDAGVMMHFTETKETETTPESSRASDEDAPTPKKKHRLRKHLTAIGAYSFAFRFSETVLSLIAIVVMCSTRGSMRTDGVDFGTLKFNHFQAYRYLVAVNVIVFVYSTFQFIQLLYTVILGISFIPSIFISTWMTFGFDQLFLYLLLSASTSAATVANMSYTGEMGIQLCSRFDVGSFCSKADVAVTMSFFAVLAMLSSTILAIYRIAVLLREY.

Disordered regions lie at residues 1-100 (MGTL…GSEG) and 172-195 (TKET…PKKK). Over 1–204 (MGTLTDPTVD…KHRLRKHLTA (204 aa)) the chain is Cytoplasmic. Residues 56 to 74 (KTNTGNAAESTASTENGET) are compositionally biased toward polar residues. Residues 205–225 (IGAYSFAFRFSETVLSLIAIV) traverse the membrane as a helical segment. The Extracellular segment spans residues 226-253 (VMCSTRGSMRTDGVDFGTLKFNHFQAYR). The chain crosses the membrane as a helical span at residues 254 to 274 (YLVAVNVIVFVYSTFQFIQLL). Over 275-276 (YT) the chain is Cytoplasmic. The chain crosses the membrane as a helical span at residues 277 to 297 (VILGISFIPSIFISTWMTFGF). Residues 298–342 (DQLFLYLLLSASTSAATVANMSYTGEMGIQLCSRFDVGSFCSKAD) lie on the Extracellular side of the membrane. Asparagine 317 is a glycosylation site (N-linked (GlcNAc...) asparagine). Residues 343–363 (VAVTMSFFAVLAMLSSTILAI) form a helical membrane-spanning segment. Topologically, residues 364 to 373 (YRIAVLLREY) are cytoplasmic.

The protein belongs to the Casparian strip membrane proteins (CASP) family. Homodimer and heterodimers.

The protein resides in the cell membrane. The polypeptide is CASP-like protein UU6 (Physcomitrium patens (Spreading-leaved earth moss)).